Here is a 239-residue protein sequence, read N- to C-terminus: MVKPIIAPSILASDFANLECGCHRVINAGAEWLHIDVMDGHFVPNITLGPPIVKSLRKAVPRVGDKESDKPKAFFDCHMMVAEPEKWVDVFVENGADQFTFHYEATKNPLELVKLIKSRGIRAACAIKPDTPVDVLFELAPYLDMALVMTVEPGFGGQKFMPDMMPKVAALREKFPQLDIQVDGGLGKETIPHAAKAGANVIVAGTSVFAAADQKDVISYMKDNVRDELRSRGLLDIDM.

Ser9 is a substrate binding site. A divalent metal cation is bound by residues His34, Asp36, and His78. Residue Asp36 is the Proton acceptor of the active site. Residues His78, 154–157 (GFGG), 183–185 (DGG), and 205–207 (GTS) each bind substrate. Residue Asp183 coordinates a divalent metal cation. Asp183 acts as the Proton donor in catalysis.

The protein belongs to the ribulose-phosphate 3-epimerase family. The cofactor is Co(2+). It depends on Fe(2+) as a cofactor. Requires Mn(2+) as cofactor. Zn(2+) serves as cofactor.

It catalyses the reaction D-ribulose 5-phosphate = D-xylulose 5-phosphate. It participates in carbohydrate degradation; pentose phosphate pathway; D-xylulose 5-phosphate from D-ribulose 5-phosphate (non-oxidative stage): step 1/1. Its function is as follows. Catalyzes the reversible epimerization of D-ribulose 5-phosphate to D-xylulose 5-phosphate. The protein is Ribulose-phosphate 3-epimerase (RPE1) of Eremothecium gossypii (strain ATCC 10895 / CBS 109.51 / FGSC 9923 / NRRL Y-1056) (Yeast).